Reading from the N-terminus, the 246-residue chain is Orotidine 5'-phosphate decarboxylase (246 aa).

Substrate-binding positions include Asp-22, Lys-44, 71–80 (DLKYHDIPHT), Thr-130, Arg-191, Gln-201, Gly-221, and Arg-222. Catalysis depends on Lys-73, which acts as the Proton donor.

It belongs to the OMP decarboxylase family. Type 1 subfamily. As to quaternary structure, homodimer.

The catalysed reaction is orotidine 5'-phosphate + H(+) = UMP + CO2. It participates in pyrimidine metabolism; UMP biosynthesis via de novo pathway; UMP from orotate: step 2/2. In terms of biological role, catalyzes the decarboxylation of orotidine 5'-monophosphate (OMP) to uridine 5'-monophosphate (UMP). This is Orotidine 5'-phosphate decarboxylase from Neisseria gonorrhoeae (strain ATCC 700825 / FA 1090).